The primary structure comprises 265 residues: Auxin-responsive protein IAA22 (265 aa).

Disordered stretches follow at residues 54–88 and 172–199; these read LSTP…ERRP and DGRE…SPAM. The span at 65–88 shows a compositional bias: basic and acidic residues; that stretch reads LMNKMKPCSDEGHGSRDAAQERRP. In terms of domain architecture, PB1 spans 91–194; it reads TMFVKVNLEG…GVDQVSERPD (104 aa).

The protein belongs to the Aux/IAA family. As to quaternary structure, homodimers and heterodimers. As to expression, highly expressed in flowers. Expressed in roots and seedlings.

The protein localises to the nucleus. Its function is as follows. Aux/IAA proteins are short-lived transcriptional factors that function as repressors of early auxin response genes at low auxin concentrations. The polypeptide is Auxin-responsive protein IAA22 (IAA22) (Oryza sativa subsp. japonica (Rice)).